The chain runs to 220 residues: Chloramphenicol acetyltransferase (220 aa).

The active-site Proton acceptor is the His195.

The protein belongs to the chloramphenicol acetyltransferase family. Homotrimer.

The enzyme catalyses chloramphenicol + acetyl-CoA = chloramphenicol 3-acetate + CoA. Its function is as follows. This enzyme is an effector of chloramphenicol resistance in bacteria. This Streptomyces acrimycini protein is Chloramphenicol acetyltransferase (cat).